We begin with the raw amino-acid sequence, 486 residues long: Ribulose bisphosphate carboxylase large chain, plasmid (486 aa).

Substrate-binding residues include Asn126 and Thr176. Lys178 serves as the catalytic Proton acceptor. Lys180 is a substrate binding site. Positions 204, 206, and 207 each coordinate Mg(2+). The residue at position 204 (Lys204) is an N6-carboxylysine. His296 acts as the Proton acceptor in catalysis. Positions 297, 329, and 381 each coordinate substrate.

Belongs to the RuBisCO large chain family. Type I subfamily. Heterohexadecamer of 8 large chains and 8 small chains. Requires Mg(2+) as cofactor.

It catalyses the reaction 2 (2R)-3-phosphoglycerate + 2 H(+) = D-ribulose 1,5-bisphosphate + CO2 + H2O. It carries out the reaction D-ribulose 1,5-bisphosphate + O2 = 2-phosphoglycolate + (2R)-3-phosphoglycerate + 2 H(+). Its function is as follows. RuBisCO catalyzes two reactions: the carboxylation of D-ribulose 1,5-bisphosphate, the primary event in carbon dioxide fixation, as well as the oxidative fragmentation of the pentose substrate. Both reactions occur simultaneously and in competition at the same active site. This chain is Ribulose bisphosphate carboxylase large chain, plasmid (cbbL2), found in Cupriavidus necator (strain ATCC 17699 / DSM 428 / KCTC 22496 / NCIMB 10442 / H16 / Stanier 337) (Ralstonia eutropha).